Here is a 247-residue protein sequence, read N- to C-terminus: Ubiquinone biosynthesis O-methyltransferase (247 aa).

S-adenosyl-L-methionine-binding residues include R45, G65, D86, and L130.

This sequence belongs to the methyltransferase superfamily. UbiG/COQ3 family.

It catalyses the reaction a 3-demethylubiquinol + S-adenosyl-L-methionine = a ubiquinol + S-adenosyl-L-homocysteine + H(+). The enzyme catalyses a 3-(all-trans-polyprenyl)benzene-1,2-diol + S-adenosyl-L-methionine = a 2-methoxy-6-(all-trans-polyprenyl)phenol + S-adenosyl-L-homocysteine + H(+). The protein operates within cofactor biosynthesis; ubiquinone biosynthesis. In terms of biological role, O-methyltransferase that catalyzes the 2 O-methylation steps in the ubiquinone biosynthetic pathway. This chain is Ubiquinone biosynthesis O-methyltransferase, found in Alkalilimnicola ehrlichii (strain ATCC BAA-1101 / DSM 17681 / MLHE-1).